A 579-amino-acid polypeptide reads, in one-letter code: V-type ATP synthase alpha chain (579 aa).

Glycine 227 to threonine 234 lines the ATP pocket.

The protein belongs to the ATPase alpha/beta chains family.

The enzyme catalyses ATP + H2O + 4 H(+)(in) = ADP + phosphate + 5 H(+)(out). In terms of biological role, produces ATP from ADP in the presence of a proton gradient across the membrane. The V-type alpha chain is a catalytic subunit. The polypeptide is V-type ATP synthase alpha chain (Anaeromyxobacter sp. (strain K)).